The primary structure comprises 90 residues: U7-theraphotoxin-Hhn1l (90 aa).

An N-terminal signal peptide occupies residues 1-19 (MKTAIFTVVLALAVFAVLS). A propeptide spanning residues 20–50 (FGWEANEKALSEEFTELIHEKEAASETEARE) is cleaved from the precursor. 3 cysteine pairs are disulfide-bonded: C51-C65, C58-C70, and C64-C81.

Belongs to the neurotoxin 10 (Hwtx-1) family. 13 (Hntx-13) subfamily. As to expression, expressed by the venom gland.

The protein localises to the secreted. Its function is as follows. Ion channel inhibitor. The polypeptide is U7-theraphotoxin-Hhn1l (Cyriopagopus hainanus (Chinese bird spider)).